We begin with the raw amino-acid sequence, 86 residues long: YcgL domain-containing protein XOO0428 (86 aa).

Residues 1 to 83 enclose the YcgL domain; that stretch reads MHAYVYKSQR…PKTRVLAGEC (83 aa).

This is YcgL domain-containing protein XOO0428 from Xanthomonas oryzae pv. oryzae (strain MAFF 311018).